Consider the following 246-residue polypeptide: 1-(5-phosphoribosyl)-5-[(5-phosphoribosylamino)methylideneamino] imidazole-4-carboxamide isomerase (246 aa).

Asp10 serves as the catalytic Proton acceptor. Asp131 functions as the Proton donor in the catalytic mechanism.

Belongs to the HisA/HisF family.

Its subcellular location is the cytoplasm. It carries out the reaction 1-(5-phospho-beta-D-ribosyl)-5-[(5-phospho-beta-D-ribosylamino)methylideneamino]imidazole-4-carboxamide = 5-[(5-phospho-1-deoxy-D-ribulos-1-ylimino)methylamino]-1-(5-phospho-beta-D-ribosyl)imidazole-4-carboxamide. Its pathway is amino-acid biosynthesis; L-histidine biosynthesis; L-histidine from 5-phospho-alpha-D-ribose 1-diphosphate: step 4/9. The polypeptide is 1-(5-phosphoribosyl)-5-[(5-phosphoribosylamino)methylideneamino] imidazole-4-carboxamide isomerase (Acidiphilium cryptum (strain JF-5)).